The sequence spans 382 residues: ATP phosphoribosyltransferase regulatory subunit (382 aa).

The protein belongs to the class-II aminoacyl-tRNA synthetase family. HisZ subfamily. As to quaternary structure, heteromultimer composed of HisG and HisZ subunits.

The protein localises to the cytoplasm. The protein operates within amino-acid biosynthesis; L-histidine biosynthesis; L-histidine from 5-phospho-alpha-D-ribose 1-diphosphate: step 1/9. Its function is as follows. Required for the first step of histidine biosynthesis. May allow the feedback regulation of ATP phosphoribosyltransferase activity by histidine. The protein is ATP phosphoribosyltransferase regulatory subunit of Burkholderia pseudomallei (strain K96243).